Here is a 645-residue protein sequence, read N- to C-terminus: Protein hrpC2 (645 aa).

7 helical membrane passes run 18–34 (VAIA…MILP), 43–59 (LLGI…MVTM), 108–124 (LVVG…FLII), 201–217 (IAGL…GIVV), 243–259 (VSQI…GVMI), 285–301 (ARAL…FAFV), and 308–324 (LFLL…YTIW). The interval 334–354 (DQRKLPSASRKGAKGEAPHIR) is disordered.

It belongs to the FHIPEP (flagella/HR/invasion proteins export pore) family.

It localises to the cell inner membrane. Its function is as follows. Involved in the secretion of a proteinaceous elicitor of the hypersensitivity response in plants. In Xanthomonas euvesicatoria, this protein is Protein hrpC2 (hrpC2).